The chain runs to 60 residues: Large ribosomal subunit protein bL33 (60 aa).

It belongs to the bacterial ribosomal protein bL33 family.

In Cytophaga hutchinsonii (strain ATCC 33406 / DSM 1761 / CIP 103989 / NBRC 15051 / NCIMB 9469 / D465), this protein is Large ribosomal subunit protein bL33.